The sequence spans 680 residues: Harmonin-binding protein USHBP1 (680 aa).

Basic residues predominate over residues 1–15 (MSARATRPRSRRGRH). 2 disordered regions span residues 1–51 (MSAR…YLGP) and 134–161 (KSVE…PGQQ). Positions 179–218 (NREDELACTQASLQDAQAEKETLQRQVQELEDSLMQMEAS) form a coiled coil. Disordered regions lie at residues 220 to 247 (PTPI…VPQD) and 384 to 405 (TMEV…PTPE). Coiled-coil stretches lie at residues 363–386 (TKGD…ATME) and 467–506 (QIQQ…LRAQ). Positions 524 to 549 (FAGDGSSGGSSEDPSSEEEAGEDRQQ) are disordered. The stretch at 573–662 (QELSASLARA…QAEELAVLTA (90 aa)) forms a coiled coil.

It belongs to the MCC family. Interacts via its C-terminus with the first PDZ domain of USH1C.

This Mus musculus (Mouse) protein is Harmonin-binding protein USHBP1.